A 371-amino-acid chain; its full sequence is 3-methyl-D-ornithine--L-lysine ligase (371 aa).

Lys-18 provides a ligand contact to ATP. Position 19–20 (19–20 (LQ)) interacts with L-lysine. Residues Asp-39, 57–58 (NI), and 80–81 (EN) contribute to the ATP site. An L-lysine-binding site is contributed by Glu-80. Residues 93–277 (EKFSCPVLFD…LIELLFRAFN (185 aa)) enclose the ATP-grasp domain. ADP is bound by residues Lys-112, Lys-139, Ser-146, and 168 to 171 (EEYV). Residues 177-179 (SLE) and Asp-233 each bind D-ornithine. Residues Glu-235, Glu-247, and Asp-249 each coordinate Mg(2+). Glu-247 serves as a coordination point for ADP. Residues 251-256 (RFPSQT) and Glu-310 contribute to the D-ornithine site. L-lysine contacts are provided by Ser-254 and Glu-310.

The protein belongs to the PylC family. Requires Mg(2+) as cofactor.

It carries out the reaction (3R)-3-methyl-D-ornithine + L-lysine + ATP = (3R)-3-methyl-D-ornithyl-N(6)-L-lysine + ADP + phosphate + H(+). The protein operates within amino-acid biosynthesis; L-pyrrolysine biosynthesis. Functionally, is required for the biosynthesis of pyrrolysine. Catalyzes the ATP-dependent ligation between (3R)-3-methyl-D-ornithine and L-lysine, leading to (3R)-3-methyl-D-ornithyl-N6-L-lysine. Is also involved in the synthesis of pyrroline-carboxy-lysine (Pcl), a demethylated form of pyrrolysine that is generated by the pyrrolysine biosynthetic enzymes when the growth media is supplemented with D-ornithine. This chain is 3-methyl-D-ornithine--L-lysine ligase, found in Methanosarcina mazei (strain ATCC BAA-159 / DSM 3647 / Goe1 / Go1 / JCM 11833 / OCM 88) (Methanosarcina frisia).